The chain runs to 73 residues: Dipeptidyl peptidase 3 (73 aa).

It belongs to the peptidase M49 family. Zn(2+) serves as cofactor.

The protein resides in the membrane. The catalysed reaction is Release of an N-terminal dipeptide from a peptide comprising four or more residues, with broad specificity. Also acts on dipeptidyl 2-naphthylamides.. Degrades neuropeptide proctolin (RYLPT) by cleavage between Tyr and Leu residues. In Blaberus craniifer (Death's head cockroach), this protein is Dipeptidyl peptidase 3.